The following is a 490-amino-acid chain: MRLSISSTNVKEWSGDVLVVGLPKGDPSTTAVNLESRFPGVSSALNQQAFEGKTGQKLVLHPLANGNPQRLVLIGLGDADAIDLDGIRAAAAAAAQASIGCKGCLGLQLPWDSHHPDHAARISAEAVRLSLYADQRFQKEPEERRLPTALELIGLPASAAAGLEPVNATCAGVELARELVAAPPNYVTPAALAETAAALAHDYGMELTILERADCEARGMGAFLAVSQGSDLPPKFIHLIYRPEGAVKRRLALVGKGLTFDSGGYNLKVGGAQIDMMKFDMGGSASVLGAMRSIGELKPAGVEVHMVVASCENMVNGSAVHPGDIVTAANGTTIEINNTDAEGRLTLADALLYACEQKPDAVVDLATLTGACVVALGDEMAGYWSNNEALAEALDTAADAGGEGLWRMPLRQSYKKGLKSLLADMKNTGPRPGGSITAALFLKEFVSQDTAWAHIDIAGPVWSDKGKGVNPAGATGYGVRTLVNWVCAQA.

Residues K256 and D261 each contribute to the Mn(2+) site. The active site involves K268. Mn(2+)-binding residues include D280, D340, and E342. R344 is a catalytic residue.

Belongs to the peptidase M17 family. The cofactor is Mn(2+).

Its subcellular location is the cytoplasm. The catalysed reaction is Release of an N-terminal amino acid, Xaa-|-Yaa-, in which Xaa is preferably Leu, but may be other amino acids including Pro although not Arg or Lys, and Yaa may be Pro. Amino acid amides and methyl esters are also readily hydrolyzed, but rates on arylamides are exceedingly low.. The enzyme catalyses Release of an N-terminal amino acid, preferentially leucine, but not glutamic or aspartic acids.. Functionally, presumably involved in the processing and regular turnover of intracellular proteins. Catalyzes the removal of unsubstituted N-terminal amino acids from various peptides. The protein is Probable cytosol aminopeptidase of Synechococcus sp. (strain CC9902).